The sequence spans 651 residues: Protein cueball (651 aa).

A signal peptide spans 1–21 (MILRLFILLSIITVYLQLSVG). Over 22–540 (IQQQFEFAIT…VCLAPNAWTG (519 aa)) the chain is Extracellular. N77, N102, and N114 each carry an N-linked (GlcNAc...) asparagine glycan. LDL-receptor class B repeat units follow at residues 115–162 (RTIY…DICG), 163–207 (RKLY…DQGA), and 208–253 (KRIF…TRNA). N183 is a glycosylation site (N-linked (GlcNAc...) asparagine). Positions 290–311 (VEGEEGTGAMDDNDIWPVGDFE) are disordered. N324 is a glycosylation site (N-linked (GlcNAc...) asparagine). 3 consecutive EGF-like domains span residues 374–408 (QLDELQREHCLGGGTYYPQQKFCVCVPGYKGTRCE), 409–440 (TNECHNFCVHGTCQISEMGYPKCYCQPGYSGE), and 443–480 (EVKKCLNFCQNGGDCQLDELTGEASCQCPSNFGGLRCE). Cystine bridges form between C383/C396, C398/C407, C412/C421, C416/C431, C447/C457, C451/C468, and C470/C479. N-linked (GlcNAc...) asparagine glycosylation is found at N482 and N499. Residues 541-561 (SVLMPLMISLILILLLLTIFI) form a helical membrane-spanning segment. Residues 562-651 (HGLRRLYKPK…LIHNMEDDLY (90 aa)) are Cytoplasmic-facing.

Belongs to the cueball family.

The protein localises to the cell membrane. Functionally, has a role in spermatogenesis and oogenesis. This is Protein cueball from Drosophila willistoni (Fruit fly).